The primary structure comprises 401 residues: Acetate kinase (401 aa).

Asn-7 is a Mg(2+) binding site. Position 14 (Lys-14) interacts with ATP. A substrate-binding site is contributed by Arg-91. Asp-148 serves as the catalytic Proton donor/acceptor. ATP is bound by residues 208–212, 283–285, and 332–336; these read HLGNG, DFR, and GVGEN. Glu-385 is a binding site for Mg(2+).

Belongs to the acetokinase family. In terms of assembly, homodimer. Mg(2+) is required as a cofactor. It depends on Mn(2+) as a cofactor.

The protein localises to the cytoplasm. It catalyses the reaction acetate + ATP = acetyl phosphate + ADP. Its pathway is metabolic intermediate biosynthesis; acetyl-CoA biosynthesis; acetyl-CoA from acetate: step 1/2. Catalyzes the formation of acetyl phosphate from acetate and ATP. Can also catalyze the reverse reaction. The protein is Acetate kinase of Caldanaerobacter subterraneus subsp. tengcongensis (strain DSM 15242 / JCM 11007 / NBRC 100824 / MB4) (Thermoanaerobacter tengcongensis).